Reading from the N-terminus, the 329-residue chain is Acetyl-coenzyme A carboxylase carboxyl transferase subunit alpha (329 aa).

Positions 40-294 (QLESLAARRR…RAAIERHLEQ (255 aa)) constitute a CoA carboxyltransferase C-terminal domain.

This sequence belongs to the AccA family. Acetyl-CoA carboxylase is a heterohexamer composed of biotin carboxyl carrier protein (AccB), biotin carboxylase (AccC) and two subunits each of ACCase subunit alpha (AccA) and ACCase subunit beta (AccD).

It is found in the cytoplasm. The enzyme catalyses N(6)-carboxybiotinyl-L-lysyl-[protein] + acetyl-CoA = N(6)-biotinyl-L-lysyl-[protein] + malonyl-CoA. Its pathway is lipid metabolism; malonyl-CoA biosynthesis; malonyl-CoA from acetyl-CoA: step 1/1. In terms of biological role, component of the acetyl coenzyme A carboxylase (ACC) complex. First, biotin carboxylase catalyzes the carboxylation of biotin on its carrier protein (BCCP) and then the CO(2) group is transferred by the carboxyltransferase to acetyl-CoA to form malonyl-CoA. The chain is Acetyl-coenzyme A carboxylase carboxyl transferase subunit alpha from Synechococcus sp. (strain CC9605).